The sequence spans 243 residues: Tryptophan synthase alpha chain (243 aa).

Catalysis depends on proton acceptor residues glutamate 31 and aspartate 42.

This sequence belongs to the TrpA family. As to quaternary structure, tetramer of two alpha and two beta chains.

The enzyme catalyses (1S,2R)-1-C-(indol-3-yl)glycerol 3-phosphate + L-serine = D-glyceraldehyde 3-phosphate + L-tryptophan + H2O. It functions in the pathway amino-acid biosynthesis; L-tryptophan biosynthesis; L-tryptophan from chorismate: step 5/5. Functionally, the alpha subunit is responsible for the aldol cleavage of indoleglycerol phosphate to indole and glyceraldehyde 3-phosphate. The sequence is that of Tryptophan synthase alpha chain from Staphylococcus haemolyticus (strain JCSC1435).